The chain runs to 351 residues: Translation initiation factor eIF2B subunit beta (351 aa).

It belongs to the eIF-2B alpha/beta/delta subunits family. As to quaternary structure, component of the translation initiation factor 2B (eIF2B) complex which is a heterodecamer of two sets of five different subunits: alpha, beta, gamma, delta and epsilon. Subunits alpha, beta and delta comprise a regulatory subcomplex and subunits epsilon and gamma comprise a catalytic subcomplex. Within the complex, the hexameric regulatory complex resides at the center, with the two heterodimeric catalytic subcomplexes bound on opposite sides.

The protein resides in the cytoplasm. It is found in the cytosol. Its activity is regulated as follows. Activated by the chemical integrated stress response (ISR) inhibitor ISRIB which stimulates guanine nucleotide exchange factor activity for both phosphorylated and unphosphorylated eIF2. Its function is as follows. Acts as a component of the translation initiation factor 2B (eIF2B) complex, which catalyzes the exchange of GDP for GTP on eukaryotic initiation factor 2 (eIF2) gamma subunit. Its guanine nucleotide exchange factor activity is repressed when bound to eIF2 complex phosphorylated on the alpha subunit, thereby limiting the amount of methionyl-initiator methionine tRNA available to the ribosome and consequently global translation is repressed. The sequence is that of Translation initiation factor eIF2B subunit beta (Eif2b2) from Mus musculus (Mouse).